The primary structure comprises 152 residues: UPF0266 membrane protein YobD (152 aa).

Transmembrane regions (helical) follow at residues L6–M26, I45–H65, and A67–I87.

It belongs to the UPF0266 family.

The protein resides in the cell inner membrane. This is UPF0266 membrane protein YobD from Shigella boydii serotype 18 (strain CDC 3083-94 / BS512).